Here is a 277-residue protein sequence, read N- to C-terminus: Small ribosomal subunit protein uS5 (277 aa).

The interval 18–40 (AAGRPSWSWQRPGERARTPGRKA) is disordered. Over residues 29-40 (PGERARTPGRKA) the composition is skewed to basic and acidic residues. Residues 87–150 (LKDEVLKIMP…ILAKLSIIPV (64 aa)) enclose the S5 DRBM domain.

This sequence belongs to the universal ribosomal protein uS5 family. Component of the small ribosomal subunit.

The protein localises to the cytoplasm. It is found in the nucleus. The protein resides in the nucleolus. In terms of biological role, component of the ribosome, a large ribonucleoprotein complex responsible for the synthesis of proteins in the cell. The small ribosomal subunit (SSU) binds messenger RNAs (mRNAs) and translates the encoded message by selecting cognate aminoacyl-transfer RNA (tRNA) molecules. The large subunit (LSU) contains the ribosomal catalytic site termed the peptidyl transferase center (PTC), which catalyzes the formation of peptide bonds, thereby polymerizing the amino acids delivered by tRNAs into a polypeptide chain. The nascent polypeptides leave the ribosome through a tunnel in the LSU and interact with protein factors that function in enzymatic processing, targeting, and the membrane insertion of nascent chains at the exit of the ribosomal tunnel. Plays a role in the assembly and function of the 40S ribosomal subunit. Mutations in this protein affects the control of translational fidelity. Involved in nucleolar processing of pre-18S ribosomal RNA and ribosome assembly. The sequence is that of Small ribosomal subunit protein uS5 (rps2) from Ictalurus punctatus (Channel catfish).